A 244-amino-acid polypeptide reads, in one-letter code: AA9 family lytic polysaccharide monooxygenase B (244 aa).

Residues 1–19 (MFLVPLLAALSLSAPKVAA) form the signal peptide. His20 serves as a coordination point for Cu(2+). Residue Tyr39 participates in (1,4-beta-D-glucosyl)n binding. 2 cysteine pairs are disulfide-bonded: Cys68/Cys189 and Cys111/Cys115. Residue His99 participates in Cu(2+) binding. N-linked (GlcNAc...) asparagine glycosylation is present at Asn152. 2 residues coordinate O2: His178 and Gln184. A Cu(2+)-binding site is contributed by Tyr186. (1,4-beta-D-glucosyl)n is bound by residues Asp224, Tyr226, and Glu229. N-linked (GlcNAc...) asparagine glycosylation occurs at Asn233.

It belongs to the polysaccharide monooxygenase AA9 family. The cofactor is Cu(2+).

It localises to the secreted. It carries out the reaction [(1-&gt;4)-beta-D-glucosyl]n+m + reduced acceptor + O2 = 4-dehydro-beta-D-glucosyl-[(1-&gt;4)-beta-D-glucosyl]n-1 + [(1-&gt;4)-beta-D-glucosyl]m + acceptor + H2O.. Lytic polysaccharide monooxygenase (LPMO) that depolymerizes crystalline and amorphous polysaccharides via the oxidation of scissile alpha- or beta-(1-4)-glycosidic bonds, yielding specifically C1 oxidation product. Catalysis by LPMOs requires the reduction of the active-site copper from Cu(II) to Cu(I) by a reducing agent and H(2)O(2) or O(2) as a cosubstrate. Displays catalytic activity on insoluble cellulose using I-beta microfibril model substrate. The chain is AA9 family lytic polysaccharide monooxygenase B from Heterobasidion irregulare (strain TC 32-1).